Reading from the N-terminus, the 280-residue chain is Movement protein (280 aa).

The disordered stretch occupies residues 248–267; the sequence is ESEELNVESPPAAIGSSSAS. The span at 255–267 shows a compositional bias: low complexity; sequence ESPPAAIGSSSAS.

It belongs to the cucumovirus movement protein family.

It is found in the host cell junction. The protein resides in the host plasmodesma. Transports viral genome to neighboring plant cells directly through plasmosdesmata, without any budding. The movement protein allows efficient cell to cell propagation, by bypassing the host cell wall barrier. Acts by forming a tubular structure at the host plasmodesmata, enlarging it enough to allow free passage of virion capsids. The sequence is that of Movement protein from Cucumis sativus (Cucumber).